Here is a 3082-residue protein sequence, read N- to C-terminus: Autotransporter adhesin BadA (3082 aa).

The N-terminal stretch at 1 to 47 (MKKLSVTSKRQYNLYASPISRRLSLLMKLSLETVTVMFLLGASPVLA) is a signal peptide. Residues 48–376 (SNLALTGAKN…DAVNVAQLKA (329 aa)) form a binds to host cells region. Residues 48–2901 (SNLALTGAKN…KVQDIATVAD (2854 aa)) are surface exposed passenger domain. The segment at 53–2850 (TGAKNLSQNS…DARHNGVDSK (2798 aa)) is does not bind host cells, no host proangiogenic cytokine induction, collagen or fibronectin, no autoagglutination. Residues 470-2850 (ITGVAEGTDA…DARHNGVDSK (2381 aa)) form a required to bind fibronectin, not required for surface expression on bacteria, bacterial autoagglutination, host cell binding, collagen binding or host proangiogenic cytokine induction region. Residues 2902–3027 (SAVKYEKDST…VSNLRYYDIP (126 aa)) form an outer membrane translocation of the passenger domain region. A run of 4 beta stranded transmembrane segments spans residues 3028 to 3039 (GSLSLSFGTGIW), 3044 to 3051 (AFAIGAGY), 3055 to 3065 (DGNIRSNLSIT), and 3070 to 3082 (QWGV…LRLK). The segment at 3028–3082 (GSLSLSFGTGIWRSQSAFAIGAGYTSEDGNIRSNLSITSSGGQWGVGAGITLRLK) is translocator domain.

It belongs to the autotransporter-2 (AT-2) (TC 1.B.40) family. In terms of assembly, homotrimer. Crystals of the head region form trimers.

The protein resides in the cell surface. It localises to the cell outer membrane. Functionally, mediates bacterial adherence to host endothelial cells and host extracellular matrix proteins (collagen type I, III, IV, laminin and fibronectin). Static versus dynamic adherence results differ slightly; in dynamic adherence studies bacteria bind to fixed components under a constant defined flow rate to simulate in vivo infection conditions. Induces secretion of host proangiogenic cytokines such as VEGFA, ADM, IGFBP-3 and IL-8. May prevent bacterial phagocytosis by macrophages. Probably mediates bacterial autoagglutination. Negatively impacts type IV secretion system effectors (VirB/D4 T4SS and its substrate Bep proteins), possibly by preventing close association of host and bacterial cells. This implies the 2 factors are expressed at different times during infection. The protein is Autotransporter adhesin BadA of Bartonella henselae (Rochalimaea henselae).